A 688-amino-acid chain; its full sequence is Glycine--tRNA ligase beta subunit (688 aa).

It belongs to the class-II aminoacyl-tRNA synthetase family. As to quaternary structure, tetramer of two alpha and two beta subunits.

It localises to the cytoplasm. It catalyses the reaction tRNA(Gly) + glycine + ATP = glycyl-tRNA(Gly) + AMP + diphosphate. The protein is Glycine--tRNA ligase beta subunit of Shewanella sp. (strain MR-4).